Here is a 490-residue protein sequence, read N- to C-terminus: Bifunctional protein HldE (490 aa).

Residues 1–330 (MFDFDDLSQA…RKILPHAYRA (330 aa)) form a ribokinase region. Residue 205–208 (NRKE) coordinates ATP. D275 is a catalytic residue. A cytidylyltransferase region spans residues 358–490 (FTNGCFDILH…LVDRARSDQR (133 aa)).

This sequence in the N-terminal section; belongs to the carbohydrate kinase PfkB family. In the C-terminal section; belongs to the cytidylyltransferase family. As to quaternary structure, homodimer.

The enzyme catalyses D-glycero-beta-D-manno-heptose 7-phosphate + ATP = D-glycero-beta-D-manno-heptose 1,7-bisphosphate + ADP + H(+). It catalyses the reaction D-glycero-beta-D-manno-heptose 1-phosphate + ATP + H(+) = ADP-D-glycero-beta-D-manno-heptose + diphosphate. Its pathway is nucleotide-sugar biosynthesis; ADP-L-glycero-beta-D-manno-heptose biosynthesis; ADP-L-glycero-beta-D-manno-heptose from D-glycero-beta-D-manno-heptose 7-phosphate: step 1/4. The protein operates within nucleotide-sugar biosynthesis; ADP-L-glycero-beta-D-manno-heptose biosynthesis; ADP-L-glycero-beta-D-manno-heptose from D-glycero-beta-D-manno-heptose 7-phosphate: step 3/4. Functionally, catalyzes the phosphorylation of D-glycero-D-manno-heptose 7-phosphate at the C-1 position to selectively form D-glycero-beta-D-manno-heptose-1,7-bisphosphate. Its function is as follows. Catalyzes the ADP transfer from ATP to D-glycero-beta-D-manno-heptose 1-phosphate, yielding ADP-D-glycero-beta-D-manno-heptose. This is Bifunctional protein HldE from Bradyrhizobium sp. (strain ORS 278).